A 195-amino-acid chain; its full sequence is Thymidylate kinase (195 aa).

7 to 14 lines the ATP pocket; sequence GIDGVGKS.

Belongs to the thymidylate kinase family.

The enzyme catalyses dTMP + ATP = dTDP + ADP. In terms of biological role, phosphorylation of dTMP to form dTDP in both de novo and salvage pathways of dTTP synthesis. This is Thymidylate kinase from Campylobacter hominis (strain ATCC BAA-381 / DSM 21671 / CCUG 45161 / LMG 19568 / NCTC 13146 / CH001A).